An 883-amino-acid chain; its full sequence is MSKTPADNHTPMMRQYFGLKSQHPNQLLFYRMGDFYELFYDDAKRASRLLDITLTARGHSGGIPIPMAGIPYHAAENYIARLVRMGESVVVAEQTGDPATSKGPVERQIARIVTPGTISDEAFLEEKRENLLLSLAHQSRKGLDIFGFSYLDMASGRFCLFEVDGHEALSSELQRLSPREILISEDFPARATLKLEKGISELGPWHFDYESSYRQLIQQFSTKDLSGFGCEAMTAAIASAGALLQYAKDTQRSALPHIQSIMVEHKDDSVLIDGATRRNLEIDINLTGGTSNTLVEVLDKCSTPMGSRLLKRWLHTPIRDLNEIQARQQVVAELQQNQSYNAFEAPLKKVGDLERILSRVALRSARPRDLLRLRFALEAAPEINGLLANATSERLQELNLRILAQPIITETLAKALVENPPSVVRDGGIFAKGYDEELDELLALSTNATDFLAEMERSEKARTGISSLKVGFNRVHGYYIEISRLHSDQAPVEYIRRQTLKNAERFITPELKAFEDKALSAKSKSLAREKELYEALLEQLNEILGELQTTSQALAQLDVLNNFAERANALSFTCPELHNRGGIQIVGGRHPVVESVISEPFVPNDLDLNDKRSLLMITGPNMGGKSTYMRQIALITLLAHTGCFVPAESASISVVDRIFTRMGSSDDLAGGRSTFMVEMTETANILNNASKNSLVLMDEVGRGTSTFDGLSLAWAAVDYLANKLKCYVLFATHYFELTTLADQLENAANVHLTATEYEDEIVFLHKVHEGPASQSYGLQVAQLAGVPRDVIGHAKQKLKELEVVTGIDLDTKTIETKANSSSIKAKTKEHLVKESKNGYQPQQVDMFAQAEQNALKNALEELDLDNMTPLEAISALYKLKSQL.

Residue 619–626 (GPNMGGKS) participates in ATP binding.

The protein belongs to the DNA mismatch repair MutS family.

Functionally, this protein is involved in the repair of mismatches in DNA. It is possible that it carries out the mismatch recognition step. This protein has a weak ATPase activity. In Marinomonas sp. (strain MWYL1), this protein is DNA mismatch repair protein MutS.